A 93-amino-acid chain; its full sequence is MKKYEIMYILRPNLDNNEVKKINDHLESVFSKKPSTILEKKEIGLKDLAYPINNHKKGYYYWFITQTDNEAVLEFNRIVKITEEVIRFIIIKE.

The protein belongs to the bacterial ribosomal protein bS6 family.

Functionally, binds together with bS18 to 16S ribosomal RNA. The polypeptide is Small ribosomal subunit protein bS6 (Phytoplasma australiense).